We begin with the raw amino-acid sequence, 52 residues long: Transmembrane protein ORF52 (52 aa).

A run of 2 helical transmembrane segments spans residues A11 to T31 and F32 to V52.

Its subcellular location is the host membrane. This chain is Transmembrane protein ORF52, found in Acidianus filamentous virus 1 (isolate United States/Yellowstone) (AFV-1).